The following is a 686-amino-acid chain: Catalase-2 (686 aa).

A compositionally biased stretch (basic and acidic residues) spans 1-27 (MSDDQNKRVNEHSKDEQLEQYRTDNSG). The interval 1 to 43 (MSDDQNKRVNEHSKDEQLEQYRTDNSGKKMTTNQGLRVSEDEH) is disordered. Catalysis depends on residues H78 and N151. Y365 provides a ligand contact to heme.

It belongs to the catalase family. HPII subfamily. Requires heme as cofactor.

The enzyme catalyses 2 H2O2 = O2 + 2 H2O. Its function is as follows. Decomposes hydrogen peroxide into water and oxygen; serves to protect cells from the toxic effects of hydrogen peroxide. Involved in sporulation. The protein is Catalase-2 (katE) of Bacillus subtilis (strain 168).